The following is a 92-amino-acid chain: Small ribosomal subunit protein uS19 (92 aa).

It belongs to the universal ribosomal protein uS19 family.

Its function is as follows. Protein S19 forms a complex with S13 that binds strongly to the 16S ribosomal RNA. The chain is Small ribosomal subunit protein uS19 (rpsS) from Rickettsia prowazekii (strain Madrid E).